The chain runs to 56 residues: Bacteriocin sublancin-168 (56 aa).

Residues 1–19 (MEKLFKEVKLEELENQKGS) constitute a propeptide that is removed on maturation. Disulfide bonds link Cys-26–Cys-55 and Cys-33–Cys-48. A glycan (S-linked (Glc) cysteine; by host) is linked at Cys-41.

In terms of assembly, monomer. Production of active sublancin-168 requires at least one thiol-disulfide oxidoreductase (BdbB or, in its absence, BdbC). Membrane translocation and cleavage of the precursor are probably performed by SunT.

The protein localises to the secreted. Functionally, bacteriocin active against Gram-positive bacteria. Inhibits B.cereus spore outgrowth, after the germination stage, approximately 1000-fold better than it inhibits exponential growth of the same cells. Inhibits B.subtilis strain ATCC 6633. The polypeptide is Bacteriocin sublancin-168 (sunA) (Bacillus pumilus (Bacillus mesentericus)).